The sequence spans 658 residues: Threonine--tRNA ligase (658 aa).

Positions 1 to 64 constitute a TGS domain; that stretch reads MLNSVSLTFP…GKSGKVEIIT (64 aa). The segment at 246–549 is catalytic; the sequence is DHRKLGREMD…LIENYSGHFP (304 aa). Zn(2+)-binding residues include Cys343, His394, and His526.

Belongs to the class-II aminoacyl-tRNA synthetase family. Homodimer. The cofactor is Zn(2+).

It is found in the cytoplasm. The enzyme catalyses tRNA(Thr) + L-threonine + ATP = L-threonyl-tRNA(Thr) + AMP + diphosphate + H(+). Catalyzes the attachment of threonine to tRNA(Thr) in a two-step reaction: L-threonine is first activated by ATP to form Thr-AMP and then transferred to the acceptor end of tRNA(Thr). Also edits incorrectly charged L-seryl-tRNA(Thr). This chain is Threonine--tRNA ligase, found in Mesorhizobium japonicum (strain LMG 29417 / CECT 9101 / MAFF 303099) (Mesorhizobium loti (strain MAFF 303099)).